The following is a 480-amino-acid chain: Lysosomal protective protein (480 aa).

Residues 1 to 28 (MIRAAPPPLFLLLLLLLLLVSWASRGEA) form the signal peptide. 4 cysteine pairs are disulfide-bonded: Cys88–Cys362, Cys240–Cys256, Cys241–Cys246, and Cys281–Cys331. Asn145 carries an N-linked (GlcNAc...) asparagine glycan. Ser178 is an active-site residue. Asn333 carries N-linked (GlcNAc...) asparagine glycosylation. Residues Asp400 and His457 contribute to the active site.

The protein belongs to the peptidase S10 family. Heterodimer of a 32 kDa chain and a 20 kDa chain; disulfide-linked.

Its subcellular location is the lysosome. The enzyme catalyses Release of a C-terminal amino acid with broad specificity.. Its function is as follows. Protective protein appears to be essential for both the activity of beta-galactosidase and neuraminidase, it associates with these enzymes and exerts a protective function necessary for their stability and activity. This protein is also a carboxypeptidase and can deamidate tachykinins. The sequence is that of Lysosomal protective protein (CTSA) from Homo sapiens (Human).